Here is a 995-residue protein sequence, read N- to C-terminus: Probable copper-transporting ATPase HMA5 (995 aa).

The Cytoplasmic portion of the chain corresponds to methionine 1–serine 299. 2 HMA domains span residues serine 51–serine 117 and glutamine 129–valine 195. Positions 62, 65, 140, and 143 each coordinate Cu(+). Positions serine 204–serine 270 constitute an HMA 3; degenerate domain. A helical transmembrane segment spans residues phenylalanine 300–proline 321. The Extracellular portion of the chain corresponds to glycine 322–isoleucine 340. Residues isoleucine 341–glycine 360 traverse the membrane as a helical segment. Residues serine 361 to arginine 367 are Cytoplasmic-facing. The helical transmembrane segment at glycine 368–leucine 388 threads the bilayer. Residues tyrosine 389–phenylalanine 406 lie on the Extracellular side of the membrane. A helical membrane pass occupies residues glutamate 407–lysine 427. Over glycine 428–arginine 561 the chain is Cytoplasmic. A helical transmembrane segment spans residues isoleucine 562–alanine 584. The Extracellular portion of the chain corresponds to glycine 585 to alanine 605. The chain crosses the membrane as a helical span at residues leucine 606–leucine 623. Over alanine 624–isoleucine 920 the chain is Cytoplasmic. Catalysis depends on aspartate 661, which acts as the 4-aspartylphosphate intermediate. Mg(2+) is bound by residues aspartate 866 and aspartate 870. The chain crosses the membrane as a helical span at residues arginine 921–glycine 940. Over valine 941–proline 952 the chain is Extracellular. Residues tryptophan 953–leucine 971 traverse the membrane as a helical segment. The Cytoplasmic segment spans residues leucine 972 to valine 995.

The protein belongs to the cation transport ATPase (P-type) (TC 3.A.3) family. Type IB subfamily. Interacts with ATX1. Expressed in roots and flowers.

It localises to the membrane. It carries out the reaction Cu(+)(in) + ATP + H2O = Cu(+)(out) + ADP + phosphate + H(+). Functionally, involved in copper import into the cell. May play a role in copper detoxification in roots. This chain is Probable copper-transporting ATPase HMA5 (HMA5), found in Arabidopsis thaliana (Mouse-ear cress).